The primary structure comprises 350 residues: MNIYIGWLFKLIPLIMGLICIALGGFVLESSGQSEYFVAGHVLISLAAICLALFTTAFIIISQLTRGVNTFYNTLFPIIGYAGSIITMIWGWALLAGNDVMADEFVAGHVIFGVGMIAACVSTVAASSGHFLLIPKNAAGSKSDGTPVQAYSSLIGNCLIAVPVLLTLLGFIWSITLLRSADITPHYVAGHVLLGLTAICACLIGLVATIVHQTRNTFSTKEHWLWCYWVIFLGSITVLQGIYVLVSSDASARLAPGIILICLGMICYSIFSKVWLLALVWRRTCSLANRIPMIPVFTCLFCLFLASFLAEMAQTDMGYFIPSRVLVGLGAVCFTLFSIVSILEAGSAKK.

At 1 to 2 (MN) the chain is on the cytoplasmic side. A helical membrane pass occupies residues 3-23 (IYIGWLFKLIPLIMGLICIAL). Residues 24-41 (GGFVLESSGQSEYFVAGH) are Periplasmic-facing. Residues 42-62 (VLISLAAICLALFTTAFIIIS) traverse the membrane as a helical segment. Over 63–74 (QLTRGVNTFYNT) the chain is Cytoplasmic. Residues 75-95 (LFPIIGYAGSIITMIWGWALL) form a helical membrane-spanning segment. At 96–104 (AGNDVMADE) the chain is on the periplasmic side. Residues 105-125 (FVAGHVIFGVGMIAACVSTVA) traverse the membrane as a helical segment. The Cytoplasmic portion of the chain corresponds to 126–157 (ASSGHFLLIPKNAAGSKSDGTPVQAYSSLIGN). Residues 158-178 (CLIAVPVLLTLLGFIWSITLL) form a helical membrane-spanning segment. The Periplasmic segment spans residues 179-190 (RSADITPHYVAG). A helical transmembrane segment spans residues 191–211 (HVLLGLTAICACLIGLVATIV). Residues 212-225 (HQTRNTFSTKEHWL) lie on the Cytoplasmic side of the membrane. A helical membrane pass occupies residues 226–246 (WCYWVIFLGSITVLQGIYVLV). At 247–257 (SSDASARLAPG) the chain is on the periplasmic side. The helical transmembrane segment at 258-278 (IILICLGMICYSIFSKVWLLA) threads the bilayer. Topologically, residues 279–290 (LVWRRTCSLANR) are cytoplasmic. The chain crosses the membrane as a helical span at residues 291-311 (IPMIPVFTCLFCLFLASFLAE). Residues 312 to 324 (MAQTDMGYFIPSR) lie on the Periplasmic side of the membrane. A helical membrane pass occupies residues 325 to 345 (VLVGLGAVCFTLFSIVSILEA). Topologically, residues 346-350 (GSAKK) are cytoplasmic.

The protein localises to the cell inner membrane. In Escherichia coli (strain K12), this protein is Inner membrane protein YhiM (yhiM).